A 351-amino-acid chain; its full sequence is Soluble interferon alpha/beta receptor OPG204 (351 aa).

Positions 1 to 19 (MTMKMMVHIYFVSLLLLLF) are cleaved as a signal peptide. Ig-like C2-type domains are found at residues 65–147 (LGEP…RSHI) and 155–237 (PKTY…IVVS). Intrachain disulfides connect C73–C129 and C172–C221. N117, N182, N261, N269, and N321 each carry an N-linked (GlcNAc...) asparagine; by host glycan. The Ig-like V-type domain occupies 246-345 (PSQDHRFKLI…HNYYFEKTLT (100 aa)). A disulfide bond links C272 and C333.

This sequence belongs to the interleukin-1 receptor family. Interacts with host IFNA1.

The protein resides in the secreted. Functionally, counteracts the antiviral effects of host IFN-alpha/beta and key IFN-inducible proteins involved in viral RNA degradation suxh as host OAS1. Acts as a soluble IFN-alpha receptor and thus inhibits the interaction between host IFN-alpha and its receptor. The chain is Soluble interferon alpha/beta receptor OPG204 (OPG204) from Vaccinia virus (strain Western Reserve) (VACV).